We begin with the raw amino-acid sequence, 434 residues long: GPI mannosyltransferase 2 (434 aa).

10 helical membrane passes run 22 to 42 (LSLA…GCPG), 109 to 129 (ILSF…SVLA), 145 to 165 (GALI…GAFL), 170 to 190 (GESL…SSLL), 210 to 230 (LFSI…LFAF), 252 to 272 (LGVI…PQWI), 311 to 331 (YWTL…FLMC), 354 to 374 (LAAP…VQII), 377 to 397 (ISSG…SHVA), and 411 to 431 (IAIQ…GSFL).

It belongs to the PIGV family.

Its subcellular location is the endoplasmic reticulum membrane. It functions in the pathway glycolipid biosynthesis; glycosylphosphatidylinositol-anchor biosynthesis. Functionally, mannosyltransferase involved in glycosylphosphatidylinositol-anchor biosynthesis. Transfers the second mannose to the glycosylphosphatidylinositol during GPI precursor assembly. This chain is GPI mannosyltransferase 2 (gpi18), found in Aspergillus oryzae (strain ATCC 42149 / RIB 40) (Yellow koji mold).